Reading from the N-terminus, the 95-residue chain is Co-chaperonin GroES (95 aa).

Belongs to the GroES chaperonin family. In terms of assembly, heptamer of 7 subunits arranged in a ring. Interacts with the chaperonin GroEL.

The protein resides in the cytoplasm. In terms of biological role, together with the chaperonin GroEL, plays an essential role in assisting protein folding. The GroEL-GroES system forms a nano-cage that allows encapsulation of the non-native substrate proteins and provides a physical environment optimized to promote and accelerate protein folding. GroES binds to the apical surface of the GroEL ring, thereby capping the opening of the GroEL channel. In Zymomonas mobilis subsp. mobilis (strain ATCC 31821 / ZM4 / CP4), this protein is Co-chaperonin GroES.